We begin with the raw amino-acid sequence, 338 residues long: MKVFYDKDADLSLIKGKQVTIIGYGSQGHAHALNLKESGVNITVGLRKGGASWSKAENAGLQVKEVAEAVKGADVVMMLLPDEQIAEVYAKEVHANIKQGAALAFAHGFNVHYGQVIPRADLDVIMIAPKAPGHTVRGTYSQGGGVPHLIAVAQDKSGAARDIALSYAAANGGGRAGIIETNFREETETDLFGEQAVLCGGTVDLIKAGFETLVEAGYAPEMAYFECLHELKLIVDLIYEGGIANMNYSISNNAEYGEYVTGPRIVTAETKKAMKAVLTDIQTGEYAKSFIIENKAGAPTLQSRRRLTAEHQIETVGAKLRSMMPWIAANKLVDQSKN.

Residues 1–181 (MKVFYDKDAD…GGGRAGIIET (181 aa)) enclose the KARI N-terminal Rossmann domain. NADP(+)-binding positions include 24–27 (YGSQ), Arg47, and Ser52. His107 is a catalytic residue. Gly133 provides a ligand contact to NADP(+). The 146-residue stretch at 182-327 (NFREETETDL…AKLRSMMPWI (146 aa)) folds into the KARI C-terminal knotted domain. Positions 190, 194, 226, and 230 each coordinate Mg(2+). Ser251 is a binding site for substrate.

The protein belongs to the ketol-acid reductoisomerase family. Mg(2+) serves as cofactor.

The catalysed reaction is (2R)-2,3-dihydroxy-3-methylbutanoate + NADP(+) = (2S)-2-acetolactate + NADPH + H(+). It catalyses the reaction (2R,3R)-2,3-dihydroxy-3-methylpentanoate + NADP(+) = (S)-2-ethyl-2-hydroxy-3-oxobutanoate + NADPH + H(+). Its pathway is amino-acid biosynthesis; L-isoleucine biosynthesis; L-isoleucine from 2-oxobutanoate: step 2/4. The protein operates within amino-acid biosynthesis; L-valine biosynthesis; L-valine from pyruvate: step 2/4. In terms of biological role, involved in the biosynthesis of branched-chain amino acids (BCAA). Catalyzes an alkyl-migration followed by a ketol-acid reduction of (S)-2-acetolactate (S2AL) to yield (R)-2,3-dihydroxy-isovalerate. In the isomerase reaction, S2AL is rearranged via a Mg-dependent methyl migration to produce 3-hydroxy-3-methyl-2-ketobutyrate (HMKB). In the reductase reaction, this 2-ketoacid undergoes a metal-dependent reduction by NADPH to yield (R)-2,3-dihydroxy-isovalerate. The sequence is that of Ketol-acid reductoisomerase (NADP(+)) from Paraburkholderia phytofirmans (strain DSM 17436 / LMG 22146 / PsJN) (Burkholderia phytofirmans).